A 151-amino-acid polypeptide reads, in one-letter code: Protein A151R (151 aa).

The protein belongs to the asfivirus A151R family. In terms of assembly, monomer. Homodimer. Interacts with protein B119L. Interacts with membrane protein E248R. The cofactor is Zn(2+).

In terms of biological role, may participate in a redox cascade for the formation of disulfide bonds in viral proteins. The polypeptide is Protein A151R (Ornithodoros (relapsing fever ticks)).